A 484-amino-acid chain; its full sequence is MPSAFGFRFDNTYRRLPEALFSDCLPQPVSTPAFVLFNDNLAQELGLDSEALSEHPEFFSGNELLAGSEPIAQAYAGHQFGSLTMLGDGRAVLLGEQLDGHGQRHDIQLKGAGRTPFSRGGDGRAALGPMLREYIVSEALHALNIATTRSLAVTRTGDRVRRDTLLPGAILTRVAASHIRVGTFQYAAGQQDPVLLEKLVDYTIARHYPALEGAENKALALFEAVMDRQIDLVVDWMRVGFIHGVLNTDNVTLSGESIDFGPCAFMDRFDPNTVFSSIDHQGRYAYGNQPSITQWNLGRFAETLLRMMDDNTDIAIEKATTSLKSFSLRYEEKWRAMMNKKLGLFGSETEDDTLIADLLTWMHAQNADYTNTFRDLIQDGLPDGEQYQSEAFQHWHQRWRARLARNSKPLASSLCLMRNHNPAVIPRNHLVEQALQAASEDNDMTPTHALLQALSAPYADRDSDDRYRQPAAPCEQVHQTFCGT.

Residues G87, G89, R90, K110, D122, G123, R173, and R180 each contribute to the ATP site. Residue D249 is the Proton acceptor of the active site. N250 and D259 together coordinate Mg(2+). D259 lines the ATP pocket.

The protein belongs to the SELO family. It depends on Mg(2+) as a cofactor. Requires Mn(2+) as cofactor.

It catalyses the reaction L-seryl-[protein] + ATP = 3-O-(5'-adenylyl)-L-seryl-[protein] + diphosphate. The enzyme catalyses L-threonyl-[protein] + ATP = 3-O-(5'-adenylyl)-L-threonyl-[protein] + diphosphate. It carries out the reaction L-tyrosyl-[protein] + ATP = O-(5'-adenylyl)-L-tyrosyl-[protein] + diphosphate. The catalysed reaction is L-histidyl-[protein] + UTP = N(tele)-(5'-uridylyl)-L-histidyl-[protein] + diphosphate. It catalyses the reaction L-seryl-[protein] + UTP = O-(5'-uridylyl)-L-seryl-[protein] + diphosphate. The enzyme catalyses L-tyrosyl-[protein] + UTP = O-(5'-uridylyl)-L-tyrosyl-[protein] + diphosphate. Functionally, nucleotidyltransferase involved in the post-translational modification of proteins. It can catalyze the addition of adenosine monophosphate (AMP) or uridine monophosphate (UMP) to a protein, resulting in modifications known as AMPylation and UMPylation. This Alcanivorax borkumensis (strain ATCC 700651 / DSM 11573 / NCIMB 13689 / SK2) protein is Protein nucleotidyltransferase YdiU.